Reading from the N-terminus, the 236-residue chain is EEF1A lysine methyltransferase 2 (236 aa).

The segment covering 1 to 11 (MSSGADGGGGA) has biased composition (gly residues). Residues 1–31 (MSSGADGGGGAAVAARSDKGSPGEDGFVPSA) form a disordered region. At S2 the chain carries N-acetylserine. S21 is modified (phosphoserine).

It belongs to the class I-like SAM-binding methyltransferase superfamily. EFM4 family.

It localises to the cytoplasm. It is found in the nucleus. It catalyses the reaction L-lysyl-[protein] + 3 S-adenosyl-L-methionine = N(6),N(6),N(6)-trimethyl-L-lysyl-[protein] + 3 S-adenosyl-L-homocysteine + 3 H(+). Functionally, protein-lysine methyltransferase that selectively catalyzes the trimethylation of EEF1A at 'Lys-318'. The sequence is that of EEF1A lysine methyltransferase 2 from Homo sapiens (Human).